The following is a 187-amino-acid chain: Adenylate kinase (187 aa).

11–16 (GAGKGT) contributes to the ATP binding site. The tract at residues 31–60 (STGDILREAVKNQTAMGIEAKRYMDAGDLV) is NMP. Residues threonine 32, arginine 37, 58-60 (DLV), 86-89 (GFPR), and glutamine 93 contribute to the AMP site. Positions 127–137 (GRAEIEGRADD) are LID. Residue arginine 128 participates in ATP binding. Positions 134 and 145 each coordinate AMP. Glycine 173 is an ATP binding site.

It belongs to the adenylate kinase family. In terms of assembly, monomer.

The protein resides in the cytoplasm. The catalysed reaction is AMP + ATP = 2 ADP. It participates in purine metabolism; AMP biosynthesis via salvage pathway; AMP from ADP: step 1/1. Catalyzes the reversible transfer of the terminal phosphate group between ATP and AMP. Plays an important role in cellular energy homeostasis and in adenine nucleotide metabolism. The sequence is that of Adenylate kinase from Leptospira interrogans serogroup Icterohaemorrhagiae serovar copenhageni (strain Fiocruz L1-130).